Consider the following 551-residue polypeptide: BAG family molecular chaperone regulator 8, chloroplastic (551 aa).

Positions 1–19 (MASHHHHNHNHVCSRHQNH) are enriched in basic residues. The segment at 1–46 (MASHHHHNHNHVCSRHQNHHNNTPQFATSPNCCNKSNHPSPPPAED) is disordered. The transit peptide at 1-52 (MASHHHHNHNHVCSRHQNHHNNTPQFATSPNCCNKSNHPSPPPAEDNLLHLV) directs the protein to the chloroplast. A compositionally biased stretch (polar residues) spans 20–38 (HNNTPQFATSPNCCNKSNH). Positions 131-160 (RDSAARVIQTHFRSYLVHRSISFRQLKELA) constitute an IQ domain. A BAG domain is found at 147–228 (VHRSISFRQL…RFVQYVDDCV (82 aa)). The tract at residues 246-281 (GKKPQGFGTSSEDEDNNADMSDDSEEVPVSSIDKRK) is disordered. Residues 256–271 (SEDEDNNADMSDDSEE) are compositionally biased toward acidic residues. At Ser-332 the chain carries Phosphoserine. Disordered regions lie at residues 414–433 (DEGK…KGSG) and 450–551 (NVYK…KMEP). The span at 479–499 (GEEKGNVNEVEEIKYVPKENE) shows a compositional bias: basic and acidic residues. Over residues 500–513 (SFEEEEEKETDSEN) the composition is skewed to acidic residues. Basic and acidic residues predominate over residues 522–534 (EGDKRVTKKEVQH).

As to quaternary structure, binds to the ATPase domain of HSP70/HSC70 chaperones.

It is found in the plastid. It localises to the chloroplast. In terms of biological role, co-chaperone that regulates diverse cellular pathways, such as programmed cell death and stress responses. The sequence is that of BAG family molecular chaperone regulator 8, chloroplastic (BAG1) from Arabidopsis thaliana (Mouse-ear cress).